The following is a 281-amino-acid chain: Apolipoprotein E (281 aa).

The signal sequence occupies residues 1 to 18 (MKVLWAALLIALLAGCQG). 5 tandem repeats follow at residues 82–103 (ALMD…EQLS), 104–125 (PVAE…ARLG), 126–147 (ADME…AMLG), 148–169 (QSTD…TVSY), and 198–219 (TRME…EQVE). Residues 82 to 219 (ALMDETMKEL…RLDEVKEQVE (138 aa)) form a 5 X 22 AA approximate tandem repeats region. Met145 carries the post-translational modification Methionine sulfoxide. Ser149 is subject to Phosphoserine. An LDL and other lipoprotein receptors binding region spans residues 160 to 170 (HLRKLRTVSYT). Heparin is bound by residues 164-167 (LRTV) and 193-200 (GERLRTRM). A homooligomerization region spans residues 230 to 281 (QQMRLQAEAFQARLKSWFEPLVEDMQRQWAGLVEKVQAAVGASAAPVPSDNH). The tract at residues 242–254 (RLKSWFEPLVEDM) is specificity for association with VLDL.

The protein belongs to the apolipoprotein A1/A4/E family. In terms of assembly, homotetramer. May interact with ABCA1; functionally associated with ABCA1 in the biogenesis of HDLs. May interact with APP/A4 amyloid-beta peptide; the interaction is extremely stable in vitro but its physiological significance is unclear. May interact with MAPT. May interact with MAP2. In the cerebrospinal fluid, interacts with secreted SORL1. Interacts with PMEL; this allows the loading of PMEL luminal fragment on ILVs to induce fibril nucleation. Post-translationally, APOE exists as multiple glycosylated and sialylated glycoforms within cells and in plasma. The extent of glycosylation and sialylation are tissue and context specific. In terms of processing, glycated in plasma VLDL. Phosphorylated by FAM20C in the extracellular medium.

It localises to the secreted. It is found in the extracellular space. The protein resides in the extracellular matrix. Its subcellular location is the extracellular vesicle. The protein localises to the endosome. It localises to the multivesicular body. APOE is an apolipoprotein, a protein associating with lipid particles, that mainly functions in lipoprotein-mediated lipid transport between organs via the plasma and interstitial fluids. APOE is a core component of plasma lipoproteins and is involved in their production, conversion and clearance. Apolipoproteins are amphipathic molecules that interact both with lipids of the lipoprotein particle core and the aqueous environment of the plasma. As such, APOE associates with chylomicrons, chylomicron remnants, very low density lipoproteins (VLDL) and intermediate density lipoproteins (IDL) but shows a preferential binding to high-density lipoproteins (HDL). It also binds a wide range of cellular receptors including the LDL receptor/LDLR, the LDL receptor-related proteins LRP1, LRP2 and LRP8 and the very low-density lipoprotein receptor/VLDLR that mediate the cellular uptake of the APOE-containing lipoprotein particles. Finally, APOE also has a heparin-binding activity and binds heparan-sulfate proteoglycans on the surface of cells, a property that supports the capture and the receptor-mediated uptake of APOE-containing lipoproteins by cells. A main function of APOE is to mediate lipoprotein clearance through the uptake of chylomicrons, VLDLs, and HDLs by hepatocytes. APOE is also involved in the biosynthesis by the liver of VLDLs as well as their uptake by peripheral tissues ensuring the delivery of triglycerides and energy storage in muscle, heart and adipose tissues. By participating in the lipoprotein-mediated distribution of lipids among tissues, APOE plays a critical role in plasma and tissues lipid homeostasis. APOE is also involved in two steps of reverse cholesterol transport, the HDLs-mediated transport of cholesterol from peripheral tissues to the liver, and thereby plays an important role in cholesterol homeostasis. First, it is functionally associated with ABCA1 in the biogenesis of HDLs in tissues. Second, it is enriched in circulating HDLs and mediates their uptake by hepatocytes. APOE also plays an important role in lipid transport in the central nervous system, regulating neuron survival and sprouting. This chain is Apolipoprotein E (APOE), found in Aotus nancymaae (Ma's night monkey).